Here is a 411-residue protein sequence, read N- to C-terminus: Peptide chain release factor subunit 1 (411 aa).

Belongs to the eukaryotic release factor 1 family. In terms of assembly, heterodimer of two subunits, one of which binds GTP.

The protein localises to the cytoplasm. Functionally, directs the termination of nascent peptide synthesis (translation) in response to the termination codons UAA, UAG and UGA. This is Peptide chain release factor subunit 1 from Methanosphaera stadtmanae (strain ATCC 43021 / DSM 3091 / JCM 11832 / MCB-3).